Here is a 282-residue protein sequence, read N- to C-terminus: Malonyl-[acyl-carrier protein] O-methyltransferase 1 (282 aa).

This sequence belongs to the methyltransferase superfamily.

It carries out the reaction malonyl-[ACP] + S-adenosyl-L-methionine = malonyl-[ACP] methyl ester + S-adenosyl-L-homocysteine. It functions in the pathway cofactor biosynthesis; biotin biosynthesis. Its function is as follows. Converts the free carboxyl group of a malonyl-thioester to its methyl ester by transfer of a methyl group from S-adenosyl-L-methionine (SAM). It allows to synthesize pimeloyl-ACP via the fatty acid synthetic pathway. The protein is Malonyl-[acyl-carrier protein] O-methyltransferase 1 of Coxiella burnetii (strain RSA 493 / Nine Mile phase I).